A 210-amino-acid chain; its full sequence is Putative transmembrane protein DDB_G0267530 (210 aa).

The tract at residues 1-40 (MGVEDQPQTQPQTQPQQQPQMGYQPQMGYQPQAQMGYQPQ) is disordered. A run of 2 helical transmembrane segments spans residues 119 to 139 (VIVF…FFFI) and 148 to 168 (TFGI…VIVV).

It localises to the membrane. This is Putative transmembrane protein DDB_G0267530 from Dictyostelium discoideum (Social amoeba).